A 218-amino-acid chain; its full sequence is Large ribosomal subunit protein uL3 (218 aa).

Belongs to the universal ribosomal protein uL3 family. As to quaternary structure, part of the 50S ribosomal subunit. Forms a cluster with proteins L14 and L19.

In terms of biological role, one of the primary rRNA binding proteins, it binds directly near the 3'-end of the 23S rRNA, where it nucleates assembly of the 50S subunit. In Brachyspira pilosicoli (Serpulina pilosicoli), this protein is Large ribosomal subunit protein uL3.